The following is a 360-amino-acid chain: Fructose import permease protein FrcC (360 aa).

The next 9 helical transmembrane spans lie at 48–68 (AAVPLIVLVLSLIAFGVILGG), 84–106 (AIVGIVGAAQTLVILTAGIDLSV), 125–145 (GFPPALSVICGLGVGALCGYI), 155–175 (LPPFIVTLGMWQIVLASNFLY), 205–225 (AVFTYGVVVMVLLVCLLWYVL), 254–274 (MLISIYTLSGLICALAGWALI), 284–304 (AGQFANIESITAVVIGGISLF), 310–330 (IMGMLFGALIVGVFSLGLRLM), and 335–355 (QWTYLLIGLLIIIAVAIDQWI).

The protein belongs to the binding-protein-dependent transport system permease family. As to quaternary structure, the complex is composed of two ATP-binding proteins (FrcA), two transmembrane proteins (FrcC) and a solute-binding protein (FrcB).

It localises to the cell inner membrane. Its function is as follows. Part of the high-affinity ABC transporter complex FrcBCA involved in fructose uptake. Is also a high-affinity transporter for ribose and mannose. Responsible for the translocation of the substrate across the membrane. This chain is Fructose import permease protein FrcC, found in Rhizobium meliloti (Ensifer meliloti).